Reading from the N-terminus, the 388-residue chain is Protein-glutamate methylesterase/protein-glutamine glutaminase 4 (388 aa).

A Response regulatory domain is found at 4–121 (KVLVVDDSGF…SGDASKIKRL (118 aa)). Asp55 bears the 4-aspartylphosphate mark. The tract at residues 137-196 (SGASAPASVPQPAKPAAPIPVREPPKPAAPVTRPAEPRAKAPPAKPEPKPEVKAAKSRRT) is disordered. Over residues 148-164 (PAKPAAPIPVREPPKPA) the composition is skewed to pro residues. A CheB-type methylesterase domain is found at 197-388 (PRQDYKVVLI…FAPRLIDGVG (192 aa)). Residues Ser209, His236, and Asp332 contribute to the active site.

It belongs to the CheB family. Post-translationally, phosphorylated by CheA. Phosphorylation of the N-terminal regulatory domain activates the methylesterase activity.

It localises to the cytoplasm. It carries out the reaction [protein]-L-glutamate 5-O-methyl ester + H2O = L-glutamyl-[protein] + methanol + H(+). The enzyme catalyses L-glutaminyl-[protein] + H2O = L-glutamyl-[protein] + NH4(+). Functionally, involved in chemotaxis. Part of a chemotaxis signal transduction system that modulates chemotaxis in response to various stimuli. Catalyzes the demethylation of specific methylglutamate residues introduced into the chemoreceptors (methyl-accepting chemotaxis proteins or MCP) by CheR. Also mediates the irreversible deamidation of specific glutamine residues to glutamic acid. The protein is Protein-glutamate methylesterase/protein-glutamine glutaminase 4 of Hahella chejuensis (strain KCTC 2396).